We begin with the raw amino-acid sequence, 376 residues long: ORC1-type DNA replication protein 2 (376 aa).

ATP-binding positions include 73-77, Tyr-209, and Arg-221; that span reads TGKTS.

Belongs to the CDC6/cdc18 family.

Involved in regulation of DNA replication. The protein is ORC1-type DNA replication protein 2 (cdc6-2) of Archaeoglobus fulgidus (strain ATCC 49558 / DSM 4304 / JCM 9628 / NBRC 100126 / VC-16).